Consider the following 345-residue polypeptide: NADPH dehydrogenase (345 aa).

Residue 23 to 26 (SPMC) participates in FMN binding. Position 28 (Tyr28) interacts with substrate. 2 residues coordinate FMN: Ala60 and Gln102. A substrate-binding site is contributed by 164-167 (HGAH). FMN-binding positions include Arg215 and 307-308 (GR).

It belongs to the NADH:flavin oxidoreductase/NADH oxidase family. NamA subfamily. In terms of assembly, homotetramer. The cofactor is FMN.

The enzyme catalyses A + NADPH + H(+) = AH2 + NADP(+). Functionally, catalyzes the reduction of the double bond of an array of alpha,beta-unsaturated aldehydes and ketones. It also reduces the nitro group of nitroester and nitroaromatic compounds. It could have a role in detoxification processes. The chain is NADPH dehydrogenase from Bacillus thuringiensis subsp. konkukian (strain 97-27).